Reading from the N-terminus, the 331-residue chain is Adenosine deaminase (331 aa).

The Zn(2+) site is built by histidine 12 and histidine 14. The substrate site is built by histidine 14 and aspartate 16. Residue histidine 197 coordinates Zn(2+). Catalysis depends on glutamate 200, which acts as the Proton donor. Residue aspartate 278 participates in Zn(2+) binding.

The protein belongs to the metallo-dependent hydrolases superfamily. Adenosine and AMP deaminases family. Adenosine deaminase subfamily. Requires Zn(2+) as cofactor.

The enzyme catalyses adenosine + H2O + H(+) = inosine + NH4(+). It catalyses the reaction 2'-deoxyadenosine + H2O + H(+) = 2'-deoxyinosine + NH4(+). Catalyzes the hydrolytic deamination of adenosine and 2-deoxyadenosine. This is Adenosine deaminase from Shewanella pealeana (strain ATCC 700345 / ANG-SQ1).